Here is a 53-residue protein sequence, read N- to C-terminus: U1-poneritoxin-Dq5a (53 aa).

The first 23 residues, 1 to 23 (MNIRLMFTLIALLVLTVSFSGAN), serve as a signal peptide directing secretion. Intrachain disulfides connect Cys25/Cys42, Cys32/Cys47, and Cys41/Cys52.

Expressed by the venom gland.

Its subcellular location is the secreted. Its function is as follows. May have neurotoxic activity. In Dinoponera quadriceps (South American ant), this protein is U1-poneritoxin-Dq5a.